We begin with the raw amino-acid sequence, 264 residues long: Glutamate racemase (264 aa).

Residues 10–11 (DS) and 42–43 (YG) contribute to the substrate site. The active-site Proton donor/acceptor is C73. 74 to 75 (NT) lines the substrate pocket. C183 serves as the catalytic Proton donor/acceptor. Residue 184–185 (TH) participates in substrate binding.

It belongs to the aspartate/glutamate racemases family.

It carries out the reaction L-glutamate = D-glutamate. The protein operates within cell wall biogenesis; peptidoglycan biosynthesis. In terms of biological role, provides the (R)-glutamate required for cell wall biosynthesis. The protein is Glutamate racemase of Streptococcus pyogenes serotype M3 (strain ATCC BAA-595 / MGAS315).